A 640-amino-acid polypeptide reads, in one-letter code: Calpain-5 (640 aa).

One can recognise a Calpain catalytic domain in the interval Leu-26 to Ile-343. Residues Cys-81, His-252, and Asn-284 contribute to the active site. A domain III region spans residues Asn-344–Arg-496. The C2 domain maps to Arg-499 to Gly-617.

Belongs to the peptidase C2 family.

In terms of biological role, calcium-regulated non-lysosomal thiol-protease. The chain is Calpain-5 (Capn5) from Rattus norvegicus (Rat).